The following is a 292-amino-acid chain: Putative OX-2 membrane glycoprotein homolog (292 aa).

Residues 1–18 form the signal peptide; sequence MSPLMLRLLPLLCIIISA. Residues 24-136 enclose the Ig-like V-type domain; that stretch reads PETSPSLVYE…TFTVDNEKTS (113 aa). Residues Cys-42 and Cys-126 are joined by a disulfide bond. 4 N-linked (GlcNAc...) asparagine; by host glycosylation sites follow: Asn-45, Asn-57, Asn-72, and Asn-195. The Ig-like C2-type domain maps to 147 to 237; sequence PIVVLYFRYL…TNQKASALVT (91 aa). A helical transmembrane segment spans residues 263–283; it reads VFTWIVPLILILIISVMVLLI.

It localises to the host membrane. This chain is Putative OX-2 membrane glycoprotein homolog (U85), found in Human herpesvirus 6B (strain Z29) (HHV-6 variant B).